The sequence spans 397 residues: Odorant receptor 59a (397 aa).

The Cytoplasmic segment spans residues 1 to 36 (MAEVRVDSLEFFKSHWTAWRYLGVAHFRVENWKNLY). A helical membrane pass occupies residues 37–57 (VFYSIVSNLLVTLCYPVHLGI). Residues 58–68 (SLFRNRTITED) are Extracellular-facing. A glycan (N-linked (GlcNAc...) asparagine) is linked at Asn62. A helical membrane pass occupies residues 69 to 92 (ILNLTTFATCTACSVKCLLYAYNI). Over 93 to 128 (KDVLEMERLLRLLDERVVGPEQRSIYGQVRVQLRNV) the chain is Cytoplasmic. The chain crosses the membrane as a helical span at residues 129 to 149 (LYVFIGIYMPCALFAELSFLF). At 150–179 (KEERGLMYPAWFPFDWLHSTRNYYIANAYQ) the chain is on the extracellular side. Residues 180–200 (IVGISFQLLQNYVSDCFPAVV) traverse the membrane as a helical segment. Residues 201-274 (LCLISSHIKM…IEAFISLPML (74 aa)) lie on the Cytoplasmic side of the membrane. Residues 275–295 (IQFTVTALNVCIGLAALVFFV) traverse the membrane as a helical segment. The Extracellular segment spans residues 296–301 (SEPMAR). Residues 302–322 (MYFIFYSLAMPLQIFPSCFFG) form a helical membrane-spanning segment. Over 323–372 (TDNEYWFGRLHYAAFSCNWHTQNRSFKRKMMLFVEQSLKKSTAVAGGMMR) the chain is Cytoplasmic. A helical transmembrane segment spans residues 373 to 393 (IHLDTFFSTLKGAYSLFTIII). At 394–397 (RMRK) the chain is on the extracellular side.

This sequence belongs to the insect chemoreceptor superfamily. Heteromeric odorant receptor channel (TC 1.A.69) family. Or2a subfamily. In terms of assembly, interacts with Orco. Complexes exist early in the endomembrane system in olfactory sensory neurons (OSNs), coupling these complexes to the conserved ciliary trafficking pathway. As to expression, expressed in neurons of the third antennal segment.

It localises to the cell membrane. Functionally, odorant receptor which mediates acceptance or avoidance behavior, depending on its substrates. The odorant receptor repertoire encodes a large collection of odor stimuli that vary widely in identity, intensity, and duration. May form a complex with Orco to form odorant-sensing units, providing sensitive and prolonged odorant signaling and calcium permeability. Involved in the behavioral responses to ethyl acetate, anisole, hexanoic acid, and pyrazines. This Drosophila melanogaster (Fruit fly) protein is Odorant receptor 59a (Or59a).